A 258-amino-acid polypeptide reads, in one-letter code: Type III pantothenate kinase 1 (258 aa).

6–13 (DMGNSHIH) contributes to the ATP binding site. 107–110 (GADR) lines the substrate pocket. Asp109 acts as the Proton acceptor in catalysis. Asp130 lines the K(+) pocket. Thr133 contributes to the ATP binding site. Substrate is bound at residue Thr185.

Belongs to the type III pantothenate kinase family. In terms of assembly, homodimer. It depends on NH4(+) as a cofactor. The cofactor is K(+).

The protein resides in the cytoplasm. The catalysed reaction is (R)-pantothenate + ATP = (R)-4'-phosphopantothenate + ADP + H(+). Its pathway is cofactor biosynthesis; coenzyme A biosynthesis; CoA from (R)-pantothenate: step 1/5. Functionally, catalyzes the phosphorylation of pantothenate (Pan), the first step in CoA biosynthesis. The chain is Type III pantothenate kinase 1 from Francisella tularensis subsp. tularensis (strain FSC 198).